Reading from the N-terminus, the 431-residue chain is FAD-dependent monooxygenase nodY1 (431 aa).

The N-terminal stretch at 1–21 (MASTGVSVIVVGLGLAGLTTA) is a signal peptide. The FAD site is built by Glu35 and Arg110. The active site involves Arg188. FAD is bound at residue Asp313.

This sequence belongs to the paxM FAD-dependent monooxygenase family. The cofactor is FAD.

It functions in the pathway secondary metabolite biosynthesis. FAD-dependent monooxygenase; part of the gene cluster that mediates the biosynthesis of the indole diterpenes nodulisporic acids (NA). Nodulisporic acid A (NAA) and its chemically modified derivatives are of particular significance because of their highly potent insecticidal activity against blood-feeding arthropods and lack of observable adverse effects on mammals, in particular the tremogenicity associated with the paspaline-derived IDTs is not observed. The geranylgeranyl diphosphate (GGPP) synthase ggs1, localized outside of the cluster, is proposed to catalyze the first step in nodulisporic acid biosynthesis via conversion of farnesyl pyrophosphate and isopentyl pyrophosphate into geranylgeranyl pyrophosphate (GGPP). Condensation of indole-3-glycerol phosphate with GGPP by the prenyl transferase nodC then forms 3-geranylgeranylindole (3-GGI). Epoxidation by the FAD-dependent monooxygenase nodM leads to a single-epoxidized-GGI that is substrate of the terpene cyclase nodB for cyclization to yield emindole SB. The terminal methyl carbon, C28, of emindole SB is then oxidized by the cytochrome P450 monooxygenase nodW to produce nodulisporic acid F (NAF), the pentacyclic core of NAA. NAF is converted to nodulisporic acid E (NAE) via prenylation. This step is probably performed by one of the indole diterpene prenyltransferases nodD1 or nodD2. Several oxidation steps performed by the FAD-linked oxidoreductase nodO and one of the cytochrome P450 monooxygenase nodR, nodX or nodZ further convert NAE to nodulisporic acid D (NAD). NAD is substrate of cytochrome P450 monooxygenase nodJ to produce the precursor of nodulisporic acid C (NAC), converted to NAC by one of the indole diterpene prenyltransferases nodD1 or nodD2. The FAD-dependent monooxygenase nodY2 then oxidizes NAC to nodulisporic acid B (NAB). Finally NAB is converted to NAA by one of the cytochrome P450 monooxygenases nodR, nodX or nodZ. The protein is FAD-dependent monooxygenase nodY1 of Hypoxylon pulicicidum.